Consider the following 327-residue polypeptide: MDAAWRGGVGCSPVCLDLCVGLSPVREPSAARHELLDRPAGCRGGGDSKSMTNDEAKILEAKVTQMSEENRRLTEVIARLYGGQIARLGLDGSASPPRPVSPLSGKKRSRESMETANSCDANSNRHQGGDADHAESFAADDGTCRRIKVSRVCRRIDPSDTSLVVKDGYQWRKYGQKVTRDNPSPRAYFRCAFAPSCPVKKKVQRSAEDSSLLVATYEGEHNHPHPSPRAGELPAAVGGAGGSLPCSISINSSGPTITLDLTKNGGAVQVVEAAHPPPPPDLKEVCREVASPEFRTALVEQMASALTSDPKFTGALAAAILQKLPEF.

Positions 56–76 form a coiled coil; the sequence is AKILEAKVTQMSEENRRLTEV. Residues 88–134 form a disordered region; it reads LGLDGSASPPRPVSPLSGKKRSRESMETANSCDANSNRHQGGDADHA. The short motif at 106–112 is the Nuclear localization signal element; the sequence is KKRSRES. The span at 114-126 shows a compositional bias: polar residues; it reads ETANSCDANSNRH. A DNA-binding region (WRKY) is located at residues 160-226; sequence DTSLVVKDGY…YEGEHNHPHP (67 aa).

This sequence belongs to the WRKY group II-a family.

It is found in the nucleus. Its function is as follows. Transcription repressor. Interacts specifically with the W box (5'-(T)TGAC[CT]-3'), a frequently occurring elicitor-responsive cis-acting element. Regulates, probably indirectly, the activation of defense-related genes during defense response. Modulates plant innate immunity against X.oryzae pv. oryzae (Xoo). The sequence is that of WRKY transcription factor WRKY76 from Oryza sativa subsp. indica (Rice).